The sequence spans 476 residues: F-box protein At5g07670 (476 aa).

An F-box domain is found at 59 to 111; it reads PDFTLLLPDLILIRVIQKIPNSQRKNLSLVCKRWFRLHGRLVRSFKVSDWEFL.

The sequence is that of F-box protein At5g07670 from Arabidopsis thaliana (Mouse-ear cress).